A 682-amino-acid polypeptide reads, in one-letter code: 1,4-alpha-glucan-branching enzyme (682 aa).

The (1,4-alpha-D-glucosyl)n site is built by tryptophan 88 and lysine 124. Catalysis depends on aspartate 342, which acts as the Nucleophile. Residue glutamate 397 is the Proton donor of the active site.

This sequence belongs to the glycosyl hydrolase 13 family. GlgB subfamily.

The protein resides in the cytoplasm. The enzyme catalyses Transfers a segment of a (1-&gt;4)-alpha-D-glucan chain to a primary hydroxy group in a similar glucan chain.. The protein operates within glycan biosynthesis; glycogen biosynthesis. Its function is as follows. Glycogen-branching enzyme participates in the glycogen biosynthetic process along with glycogenin and glycogen synthase. Generates alpha-1,6-glucosidic branches from alpha-1,4-linked glucose chains, to increase solubility of the glycogen polymer. The sequence is that of 1,4-alpha-glucan-branching enzyme from Cryptococcus neoformans var. grubii serotype A (strain H99 / ATCC 208821 / CBS 10515 / FGSC 9487) (Filobasidiella neoformans var. grubii).